The primary structure comprises 320 residues: Cytochrome f (320 aa).

The N-terminal stretch at methionine 1–alanine 35 is a signal peptide. 4 residues coordinate heme: tyrosine 36, cysteine 56, cysteine 59, and histidine 60. The chain crosses the membrane as a helical span at residues valine 286–lysine 306.

The protein belongs to the cytochrome f family. In terms of assembly, the 4 large subunits of the cytochrome b6-f complex are cytochrome b6, subunit IV (17 kDa polypeptide, petD), cytochrome f and the Rieske protein, while the 4 small subunits are PetG, PetL, PetM and PetN. The complex functions as a dimer. Requires heme as cofactor.

It localises to the plastid. The protein localises to the chloroplast thylakoid membrane. Functionally, component of the cytochrome b6-f complex, which mediates electron transfer between photosystem II (PSII) and photosystem I (PSI), cyclic electron flow around PSI, and state transitions. In Barbarea verna (Land cress), this protein is Cytochrome f.